The chain runs to 705 residues: Elongation factor G (705 aa).

In terms of domain architecture, tr-type G spans 7 to 287; sequence HLTRNIGIMA…YVCAFLPSPL (281 aa). GTP contacts are provided by residues 16–23, 84–88, and 138–141; these read AHIDAGKT, DTPGH, and NKMD. Positions 291–312 are disordered; sequence NVVGTNPDTGAEEDRKPSEDDK. Positions 302 to 312 are enriched in basic and acidic residues; sequence EEDRKPSEDDK.

Belongs to the TRAFAC class translation factor GTPase superfamily. Classic translation factor GTPase family. EF-G/EF-2 subfamily.

It localises to the cytoplasm. Catalyzes the GTP-dependent ribosomal translocation step during translation elongation. During this step, the ribosome changes from the pre-translocational (PRE) to the post-translocational (POST) state as the newly formed A-site-bound peptidyl-tRNA and P-site-bound deacylated tRNA move to the P and E sites, respectively. Catalyzes the coordinated movement of the two tRNA molecules, the mRNA and conformational changes in the ribosome. The sequence is that of Elongation factor G from Bacteroides fragilis (strain ATCC 25285 / DSM 2151 / CCUG 4856 / JCM 11019 / LMG 10263 / NCTC 9343 / Onslow / VPI 2553 / EN-2).